Here is a 45-residue protein sequence, read N- to C-terminus: Cytochrome b559 subunit beta (45 aa).

The chain crosses the membrane as a helical span at residues 20-36 (WLALHTLGIPTVFFLGA). H24 is a heme binding site.

This sequence belongs to the PsbE/PsbF family. In terms of assembly, heterodimer of an alpha subunit and a beta subunit. PSII is composed of 1 copy each of membrane proteins PsbA, PsbB, PsbC, PsbD, PsbE, PsbF, PsbH, PsbI, PsbJ, PsbK, PsbL, PsbM, PsbT, PsbX, PsbY, PsbZ, Psb30/Ycf12, peripheral proteins PsbO, CyanoQ (PsbQ), PsbU, PsbV and a large number of cofactors. It forms dimeric complexes. The cofactor is heme b.

The protein localises to the cellular thylakoid membrane. Its function is as follows. This b-type cytochrome is tightly associated with the reaction center of photosystem II (PSII). PSII is a light-driven water:plastoquinone oxidoreductase that uses light energy to abstract electrons from H(2)O, generating O(2) and a proton gradient subsequently used for ATP formation. It consists of a core antenna complex that captures photons, and an electron transfer chain that converts photonic excitation into a charge separation. The polypeptide is Cytochrome b559 subunit beta (Synechococcus sp. (strain CC9902)).